We begin with the raw amino-acid sequence, 433 residues long: Putative zinc metalloprotease BB_0118 (433 aa).

Zn(2+) is bound at residue H17. Residue E18 is part of the active site. H21 serves as a coordination point for Zn(2+). Residues 98-120 (ILIYFAGPLFNLIFSFIVFIFIS) traverse the membrane as a helical segment. In terms of domain architecture, PDZ spans 193–265 (TVSLQDFLKE…VVEIKFSRNG (73 aa)). 3 helical membrane-spanning segments follow: residues 334-356 (VSGPVGIVGILSSSYSLGILYWI), 366-388 (LAGMNLFFIVIPIFDGGQIFISF), and 401-423 (TIYSFYSFGIFFGLFLFGLGLFN).

This sequence belongs to the peptidase M50B family. The cofactor is Zn(2+).

The protein resides in the cell inner membrane. In Borreliella burgdorferi (strain ATCC 35210 / DSM 4680 / CIP 102532 / B31) (Borrelia burgdorferi), this protein is Putative zinc metalloprotease BB_0118.